The primary structure comprises 425 residues: Glutamate-1-semialdehyde 2,1-aminomutase (425 aa).

At Lys-265 the chain carries N6-(pyridoxal phosphate)lysine.

This sequence belongs to the class-III pyridoxal-phosphate-dependent aminotransferase family. HemL subfamily. In terms of assembly, homodimer. Pyridoxal 5'-phosphate is required as a cofactor.

The protein localises to the cytoplasm. It catalyses the reaction (S)-4-amino-5-oxopentanoate = 5-aminolevulinate. The protein operates within porphyrin-containing compound metabolism; protoporphyrin-IX biosynthesis; 5-aminolevulinate from L-glutamyl-tRNA(Glu): step 2/2. This Psychromonas ingrahamii (strain DSM 17664 / CCUG 51855 / 37) protein is Glutamate-1-semialdehyde 2,1-aminomutase.